A 317-amino-acid polypeptide reads, in one-letter code: L-lactate dehydrogenase 1 (317 aa).

NAD(+) is bound by residues V17, D38, K43, Y69, and 83-84; that span reads GA. Substrate contacts are provided by Q86 and R92. NAD(+)-binding positions include S105, 122 to 124, and S147; that span reads ATN. 124 to 127 is a substrate binding site; that stretch reads NPVD. 152-155 serves as a coordination point for substrate; the sequence is DSAR. H179 functions as the Proton acceptor in the catalytic mechanism. Residue Y223 is modified to Phosphotyrosine. T232 serves as a coordination point for substrate.

This sequence belongs to the LDH/MDH superfamily. LDH family. Homotetramer.

The protein resides in the cytoplasm. It carries out the reaction (S)-lactate + NAD(+) = pyruvate + NADH + H(+). It functions in the pathway fermentation; pyruvate fermentation to lactate; (S)-lactate from pyruvate: step 1/1. Functionally, catalyzes the conversion of lactate to pyruvate (Potential). Appears to be the primary factor that allows S.aureus growth during nitrosative stress in both aerobically and anaerobically cultured cells. The protein is L-lactate dehydrogenase 1 of Staphylococcus aureus (strain MRSA252).